Reading from the N-terminus, the 462-residue chain is Bifunctional protein GlmU (462 aa).

Residues 1–239 (MTESVSKPVR…EASVQGVNAQ (239 aa)) form a pyrophosphorylase region. UDP-N-acetyl-alpha-D-glucosamine contacts are provided by residues 17–20 (LAAG), Lys-31, Gln-84, and 89–90 (GT). A Mg(2+)-binding site is contributed by Asp-114. Gly-150, Glu-165, Asn-180, and Asn-237 together coordinate UDP-N-acetyl-alpha-D-glucosamine. Asn-237 lines the Mg(2+) pocket. Residues 240–260 (AELAAAEAVWQQNRRKALMVD) form a linker region. The tract at residues 261–462 (GVTMPAPDTV…QKDKKKDKKA (202 aa)) is N-acetyltransferase. 2 residues coordinate UDP-N-acetyl-alpha-D-glucosamine: Arg-326 and Lys-344. The active-site Proton acceptor is the His-356. Residues Tyr-359 and Asn-370 each contribute to the UDP-N-acetyl-alpha-D-glucosamine site. Residues Ala-373, 379–380 (NY), Ser-398, Ser-416, and Arg-433 each bind acetyl-CoA.

In the N-terminal section; belongs to the N-acetylglucosamine-1-phosphate uridyltransferase family. This sequence in the C-terminal section; belongs to the transferase hexapeptide repeat family. Homotrimer. Mg(2+) is required as a cofactor.

It is found in the cytoplasm. The enzyme catalyses alpha-D-glucosamine 1-phosphate + acetyl-CoA = N-acetyl-alpha-D-glucosamine 1-phosphate + CoA + H(+). It carries out the reaction N-acetyl-alpha-D-glucosamine 1-phosphate + UTP + H(+) = UDP-N-acetyl-alpha-D-glucosamine + diphosphate. It functions in the pathway nucleotide-sugar biosynthesis; UDP-N-acetyl-alpha-D-glucosamine biosynthesis; N-acetyl-alpha-D-glucosamine 1-phosphate from alpha-D-glucosamine 6-phosphate (route II): step 2/2. Its pathway is nucleotide-sugar biosynthesis; UDP-N-acetyl-alpha-D-glucosamine biosynthesis; UDP-N-acetyl-alpha-D-glucosamine from N-acetyl-alpha-D-glucosamine 1-phosphate: step 1/1. It participates in bacterial outer membrane biogenesis; LPS lipid A biosynthesis. Functionally, catalyzes the last two sequential reactions in the de novo biosynthetic pathway for UDP-N-acetylglucosamine (UDP-GlcNAc). The C-terminal domain catalyzes the transfer of acetyl group from acetyl coenzyme A to glucosamine-1-phosphate (GlcN-1-P) to produce N-acetylglucosamine-1-phosphate (GlcNAc-1-P), which is converted into UDP-GlcNAc by the transfer of uridine 5-monophosphate (from uridine 5-triphosphate), a reaction catalyzed by the N-terminal domain. The polypeptide is Bifunctional protein GlmU (Caulobacter vibrioides (strain ATCC 19089 / CIP 103742 / CB 15) (Caulobacter crescentus)).